Here is a 107-residue protein sequence, read N- to C-terminus: SH3 domain-binding glutamic acid-rich-like protein 2 (107 aa).

The short motif at 61–67 (QGNPLPP) is the SH3-binding element.

This sequence belongs to the SH3BGR family.

It is found in the nucleus. This chain is SH3 domain-binding glutamic acid-rich-like protein 2 (SH3BGRL2), found in Bos taurus (Bovine).